A 92-amino-acid polypeptide reads, in one-letter code: Large ribosomal subunit protein bL25 (92 aa).

Belongs to the bacterial ribosomal protein bL25 family. Part of the 50S ribosomal subunit; part of the 5S rRNA/L5/L18/L25 subcomplex. Contacts the 5S rRNA. Binds to the 5S rRNA independently of L5 and L18.

This is one of the proteins that binds to the 5S RNA in the ribosome where it forms part of the central protuberance. The protein is Large ribosomal subunit protein bL25 of Aliivibrio fischeri (strain ATCC 700601 / ES114) (Vibrio fischeri).